A 287-amino-acid polypeptide reads, in one-letter code: Rhomboid-like protein 18 (287 aa).

Transmembrane regions (helical) follow at residues 10-30, 53-73, 90-110, 117-137, 145-165, and 172-192; these read NAPV…FFGI, LIIS…LYLL, VFIF…LSLT, LLTS…FLDI, VLGV…QLLL, and IFTG…IFGI. One can recognise a UBA domain in the interval 244-284; that stretch reads EPSEEAIATLVSMGFDQNAARQALVHARNDVNAATNILLEA.

Belongs to the peptidase S54 family.

The protein localises to the membrane. Probable rhomboid-type serine protease that catalyzes intramembrane proteolysis. The polypeptide is Rhomboid-like protein 18 (Arabidopsis thaliana (Mouse-ear cress)).